The primary structure comprises 125 residues: UPF0102 protein ABO_0585 (125 aa).

This sequence belongs to the UPF0102 family.

The chain is UPF0102 protein ABO_0585 from Alcanivorax borkumensis (strain ATCC 700651 / DSM 11573 / NCIMB 13689 / SK2).